The following is a 161-amino-acid chain: Phosphopantetheine adenylyltransferase (161 aa).

T10 contacts substrate. ATP is bound by residues 10–11 (TF) and H18. Substrate is bound by residues K42, L74, and R88. ATP-binding positions include 89–91 (GLR), E99, and 124–130 (NAFISSS).

It belongs to the bacterial CoaD family. As to quaternary structure, homohexamer. Mg(2+) serves as cofactor.

It is found in the cytoplasm. The catalysed reaction is (R)-4'-phosphopantetheine + ATP + H(+) = 3'-dephospho-CoA + diphosphate. It participates in cofactor biosynthesis; coenzyme A biosynthesis; CoA from (R)-pantothenate: step 4/5. Reversibly transfers an adenylyl group from ATP to 4'-phosphopantetheine, yielding dephospho-CoA (dPCoA) and pyrophosphate. This chain is Phosphopantetheine adenylyltransferase, found in Wolinella succinogenes (strain ATCC 29543 / DSM 1740 / CCUG 13145 / JCM 31913 / LMG 7466 / NCTC 11488 / FDC 602W) (Vibrio succinogenes).